The primary structure comprises 155 residues: Aspartate 1-decarboxylase (155 aa).

Residue Ser24 is the Schiff-base intermediate with substrate; via pyruvic acid of the active site. A Pyruvic acid (Ser) modification is found at Ser24. Thr56 contacts substrate. Tyr57 acts as the Proton donor in catalysis. Residue 72 to 74 coordinates substrate; sequence GAA.

It belongs to the PanD family. In terms of assembly, heterooctamer of four alpha and four beta subunits. Requires pyruvate as cofactor. Post-translationally, is synthesized initially as an inactive proenzyme, which is activated by self-cleavage at a specific serine bond to produce a beta-subunit with a hydroxyl group at its C-terminus and an alpha-subunit with a pyruvoyl group at its N-terminus.

It localises to the cytoplasm. It carries out the reaction L-aspartate + H(+) = beta-alanine + CO2. It participates in cofactor biosynthesis; (R)-pantothenate biosynthesis; beta-alanine from L-aspartate: step 1/1. In terms of biological role, catalyzes the pyruvoyl-dependent decarboxylation of aspartate to produce beta-alanine. This chain is Aspartate 1-decarboxylase, found in Methylocella silvestris (strain DSM 15510 / CIP 108128 / LMG 27833 / NCIMB 13906 / BL2).